Reading from the N-terminus, the 178-residue chain is MPSLLSLLRHGIHSSIFDIHFSPDRFKFLCPSFGLYLFITLRKSSFEIDYNNGLIYIEYNVPEPLSNKYLLTYDISCAGNKCFKHAEIFYNLYSDLFKQYVYPTLSSIKASKIHVKECSKYLIESNLVKLVSYPYLDFFVHDVLHFRVVTSMFNEFKKFDCAYPRRYITRFVKYAKKI.

This is an uncharacterized protein from Saccharolobus islandicus (Sulfolobus islandicus).